Consider the following 498-residue polypeptide: ATP synthase subunit beta, chloroplastic (498 aa).

ATP is bound at residue 172–179; the sequence is GGAGVGKT.

The protein belongs to the ATPase alpha/beta chains family. In terms of assembly, F-type ATPases have 2 components, CF(1) - the catalytic core - and CF(0) - the membrane proton channel. CF(1) has five subunits: alpha(3), beta(3), gamma(1), delta(1), epsilon(1). CF(0) has four main subunits: a(1), b(1), b'(1) and c(9-12).

The protein resides in the plastid. It localises to the chloroplast thylakoid membrane. It carries out the reaction ATP + H2O + 4 H(+)(in) = ADP + phosphate + 5 H(+)(out). Functionally, produces ATP from ADP in the presence of a proton gradient across the membrane. The catalytic sites are hosted primarily by the beta subunits. In Vitis vinifera (Grape), this protein is ATP synthase subunit beta, chloroplastic.